Reading from the N-terminus, the 374-residue chain is Ribosomal RNA large subunit methyltransferase G (374 aa).

The protein belongs to the methyltransferase superfamily. RlmG family.

It is found in the cytoplasm. The enzyme catalyses guanosine(1835) in 23S rRNA + S-adenosyl-L-methionine = N(2)-methylguanosine(1835) in 23S rRNA + S-adenosyl-L-homocysteine + H(+). Specifically methylates the guanine in position 1835 (m2G1835) of 23S rRNA. The chain is Ribosomal RNA large subunit methyltransferase G from Pseudomonas fluorescens (strain Pf0-1).